Consider the following 456-residue polypeptide: Glycerol-3-phosphate dehydrogenase [NAD(+)] At3g07690, cytosolic (456 aa).

NAD(+)-binding positions include 41–46 (GAGAWG), Lys189, and Ala228. Position 189 (Lys189) interacts with substrate. Lys278 (proton acceptor) is an active-site residue. NAD(+)-binding residues include Arg340 and Gln368. Residue 340 to 341 (RN) participates in substrate binding.

It belongs to the NAD-dependent glycerol-3-phosphate dehydrogenase family. In terms of assembly, homodimer.

It localises to the cytoplasm. The catalysed reaction is sn-glycerol 3-phosphate + NAD(+) = dihydroxyacetone phosphate + NADH + H(+). Required for glycerol-3-phosphate (G3P) accumulation during systemic acquired resistance (SAR) establishment. In Arabidopsis thaliana (Mouse-ear cress), this protein is Glycerol-3-phosphate dehydrogenase [NAD(+)] At3g07690, cytosolic.